Here is a 147-residue protein sequence, read N- to C-terminus: Hemoglobin subunit beta-2 (147 aa).

The Globin domain maps to 3–147 (EWTDSERAII…VVSALGRQYH (145 aa)). Heme b-binding residues include H64 and H93.

Belongs to the globin family. In terms of assembly, hb 3 is a heterotetramer of two alpha-2 and two beta-2 chains. In terms of tissue distribution, red blood cells.

Involved in oxygen transport from gills to the various peripheral tissues. This Boreogadus saida (Polar cod) protein is Hemoglobin subunit beta-2 (hbb2).